A 563-amino-acid polypeptide reads, in one-letter code: Putative cysteine ligase BshC (563 aa).

A coiled-coil region spans residues lysine 493–leucine 518.

This sequence belongs to the BshC family.

The sequence is that of Putative cysteine ligase BshC from Chlorobaculum tepidum (strain ATCC 49652 / DSM 12025 / NBRC 103806 / TLS) (Chlorobium tepidum).